The primary structure comprises 173 residues: Ribulose bisphosphate carboxylase small subunit, chloroplastic 1 (173 aa).

A chloroplast-targeting transit peptide spans Met-1–Ser-52.

It belongs to the RuBisCO small chain family. As to quaternary structure, heterohexadecamer of 8 large and 8 small subunits.

The protein resides in the plastid. It is found in the chloroplast. RuBisCO catalyzes two reactions: the carboxylation of D-ribulose 1,5-bisphosphate, the primary event in carbon dioxide fixation, as well as the oxidative fragmentation of the pentose substrate. Both reactions occur simultaneously and in competition at the same active site. Although the small subunit is not catalytic it is essential for maximal activity. The polypeptide is Ribulose bisphosphate carboxylase small subunit, chloroplastic 1 (Lemna gibba (Swollen duckweed)).